The sequence spans 398 residues: Elongation factor Tu (398 aa).

Residues 10-207 enclose the tr-type G domain; it reads KPHVNIGTIG…TVDEYIPEPE (198 aa). Residues 19-26 are G1; it reads GHVDHGKT. 19 to 26 lines the GTP pocket; the sequence is GHVDHGKT. Thr26 provides a ligand contact to Mg(2+). The interval 63–67 is G2; the sequence is GITIN. The segment at 84–87 is G3; the sequence is DAPG. GTP-binding positions include 84 to 88 and 139 to 142; these read DAPGH and NKVD. The G4 stretch occupies residues 139–142; that stretch reads NKVD. Positions 177–179 are G5; sequence SAL.

Belongs to the TRAFAC class translation factor GTPase superfamily. Classic translation factor GTPase family. EF-Tu/EF-1A subfamily. As to quaternary structure, monomer.

It localises to the cytoplasm. The enzyme catalyses GTP + H2O = GDP + phosphate + H(+). In terms of biological role, GTP hydrolase that promotes the GTP-dependent binding of aminoacyl-tRNA to the A-site of ribosomes during protein biosynthesis. This is Elongation factor Tu from Streptococcus agalactiae serotype V (strain ATCC BAA-611 / 2603 V/R).